The following is a 222-amino-acid chain: Cytidylate kinase (222 aa).

11–19 (GPSGSGKST) serves as a coordination point for ATP.

It belongs to the cytidylate kinase family. Type 1 subfamily.

Its subcellular location is the cytoplasm. It carries out the reaction CMP + ATP = CDP + ADP. The catalysed reaction is dCMP + ATP = dCDP + ADP. In Ureaplasma urealyticum serovar 10 (strain ATCC 33699 / Western), this protein is Cytidylate kinase.